The chain runs to 150 residues: D-aminoacyl-tRNA deacylase (150 aa).

The Gly-cisPro motif, important for rejection of L-amino acids signature appears at Gly-138–Pro-139.

This sequence belongs to the DTD family. In terms of assembly, homodimer.

It is found in the cytoplasm. It carries out the reaction glycyl-tRNA(Ala) + H2O = tRNA(Ala) + glycine + H(+). The catalysed reaction is a D-aminoacyl-tRNA + H2O = a tRNA + a D-alpha-amino acid + H(+). In terms of biological role, an aminoacyl-tRNA editing enzyme that deacylates mischarged D-aminoacyl-tRNAs. Also deacylates mischarged glycyl-tRNA(Ala), protecting cells against glycine mischarging by AlaRS. Acts via tRNA-based rather than protein-based catalysis; rejects L-amino acids rather than detecting D-amino acids in the active site. By recycling D-aminoacyl-tRNA to D-amino acids and free tRNA molecules, this enzyme counteracts the toxicity associated with the formation of D-aminoacyl-tRNA entities in vivo and helps enforce protein L-homochirality. The sequence is that of D-aminoacyl-tRNA deacylase from Porphyromonas gingivalis (strain ATCC 33277 / DSM 20709 / CIP 103683 / JCM 12257 / NCTC 11834 / 2561).